A 116-amino-acid polypeptide reads, in one-letter code: MMEEIDNNELKFRMITPDGESFLVNSAPIEGWQNDIWKTFDEQKRVFDAEIKKAFEHCNVPLEETIERAELVVDKDDNTVLTIDKLPVLILYKPEFLYSKGKAVQRYKRLYEEDVE.

The protein is SPbeta prophage-derived uncharacterized protein YoqA (yoqA) of Bacillus subtilis (strain 168).